A 60-amino-acid chain; its full sequence is UPF0434 protein YPA_0693 (60 aa).

This sequence belongs to the UPF0434 family.

This Yersinia pestis bv. Antiqua (strain Antiqua) protein is UPF0434 protein YPA_0693.